The primary structure comprises 367 residues: uncharacterized protein (367 aa).

Residues 6 to 26 (IAAGVVVALAAVWCTSAWFTG) form a helical membrane-spanning segment.

It to E.coli YdgA and YihF.

Its subcellular location is the membrane. This is an uncharacterized protein from Haemophilus influenzae (strain ATCC 51907 / DSM 11121 / KW20 / Rd).